The chain runs to 692 residues: Threonine--tRNA ligase (692 aa).

The region spanning A2–T59 is the TGS domain. Positions D255–P561 are catalytic. Zn(2+) contacts are provided by C360, H411, and H538.

The protein belongs to the class-II aminoacyl-tRNA synthetase family. In terms of assembly, homodimer. It depends on Zn(2+) as a cofactor.

It is found in the cytoplasm. The catalysed reaction is tRNA(Thr) + L-threonine + ATP = L-threonyl-tRNA(Thr) + AMP + diphosphate + H(+). Catalyzes the attachment of threonine to tRNA(Thr) in a two-step reaction: L-threonine is first activated by ATP to form Thr-AMP and then transferred to the acceptor end of tRNA(Thr). Also edits incorrectly charged L-seryl-tRNA(Thr). The polypeptide is Threonine--tRNA ligase (Bifidobacterium animalis subsp. lactis (strain AD011)).